The primary structure comprises 664 residues: Metal-nicotianamine transporter YSL2 (664 aa).

Transmembrane regions (helical) follow at residues 31-51 (ITVR…VICL), 55-75 (LTTG…FVFL), 103-123 (CAVA…LLGL), 147-167 (GVGW…VVLV), 209-229 (GFIK…FYSG), 268-288 (LVNL…WPLI), 314-334 (FICI…ILFF), 378-398 (IPLW…IIAI), 409-429 (FVLV…YGAG), 457-477 (VVAG…SADL), 496-516 (VAQA…FFLF), 549-569 (SALP…AVAA), 594-614 (FLVG…VYVW), and 629-649 (VASG…LLAL).

It belongs to the YSL (TC 2.A.67.2) family. In terms of tissue distribution, expressed in roots, leaves and weakly in shoots. Restricted to the veins, to the central cylinder of the young roots and to the pericycle and the endodermis cells facing the meta-xylem tubes in older roots. Expressed in the vasculature of sepals, petals, anthers, stigma and siliques, but not in developing seeds or in meristematic zones.

It localises to the cell membrane. May be involved in the lateral transport of nicotianamine-chelated metals in the vasculature. The protein is Metal-nicotianamine transporter YSL2 (YSL2) of Arabidopsis thaliana (Mouse-ear cress).